The sequence spans 229 residues: MRRNIFCLACLWIVQACLSLDRADILYNIRQTSRPDVIPTQRDRPVAVSVSLKFINILEVNEITNEVDVVFWQQTTWSDRTLAWNSSHSPDQVSVPISSLWVPDLAAYNAISKPEVLTPQLARVVSDGEVLYMPSIRQRFSCDVSGVDTESGATCRIKIGSWTHHSREISVDPTTENSDDSEYFSQYSRFEILDVTQKKNSVTYSCCPEAYEDVEVSLNFRKKGRSEIL.

An N-terminal signal peptide occupies residues 1-19 (MRRNIFCLACLWIVQACLS). N-linked (GlcNAc...) asparagine glycosylation occurs at N85. The region spanning 114-217 (PEVLTPQLAR…PEAYEDVEVS (104 aa)) is the Ig-like domain. Residues C142 and C155 are joined by a disulfide bond.

As to quaternary structure, homopentamer. Post-translationally, N-glycosylated. Expressed by glial cells.

It is found in the synaptic cleft. In terms of biological role, binds to acetylcholine. Modulates neuronal synaptic transmission. In Lymnaea stagnalis (Great pond snail), this protein is Acetylcholine-binding protein.